Here is a 185-residue protein sequence, read N- to C-terminus: Ribosome-recycling factor (185 aa).

This sequence belongs to the RRF family.

Its subcellular location is the cytoplasm. In terms of biological role, responsible for the release of ribosomes from messenger RNA at the termination of protein biosynthesis. May increase the efficiency of translation by recycling ribosomes from one round of translation to another. The sequence is that of Ribosome-recycling factor from Mycobacterium leprae (strain Br4923).